We begin with the raw amino-acid sequence, 287 residues long: MFPYYPLRLLKSLQLLVWASVLLALTFIFSIFSISVTNVLSISFLRIPFALFGWIFGPIWGFIFGFLSDTIDWLTKGYVWFWMFALQKPLFAFLAGIVKGIYLVRKNASNYKVDFWVLQTLLVTFFVVSVTLLLLYLTNNEFQQIGTKNFQTADLSVNVVVLQIITLVSFVIFFLVTEGFLGFVYVKKRNKEQALLTIYSLVLMVLMSVVVSILLGTIAAIEFITFINNGRPSNNFVLYGVYFFLLPRVLVQALLLPIYVALFYPLIGIVENNLKNYLLLFTLSWKS.

This is an uncharacterized protein from Mycoplasma genitalium (strain ATCC 33530 / DSM 19775 / NCTC 10195 / G37) (Mycoplasmoides genitalium).